A 373-amino-acid polypeptide reads, in one-letter code: tRNA-specific 2-thiouridylase MnmA (373 aa).

ATP contacts are provided by residues 12–19 (GMSGGVDS) and Met-38. The interval 98 to 100 (NPD) is interaction with target base in tRNA. The active-site Nucleophile is Cys-103. Residues Cys-103 and Cys-200 are joined by a disulfide bond. Residue Gly-127 participates in ATP binding. Residues 150–152 (KDQ) are interaction with tRNA. Cys-200 (cysteine persulfide intermediate) is an active-site residue. Residues 312 to 313 (RY) are interaction with tRNA.

Belongs to the MnmA/TRMU family.

The protein localises to the cytoplasm. The catalysed reaction is S-sulfanyl-L-cysteinyl-[protein] + uridine(34) in tRNA + AH2 + ATP = 2-thiouridine(34) in tRNA + L-cysteinyl-[protein] + A + AMP + diphosphate + H(+). Catalyzes the 2-thiolation of uridine at the wobble position (U34) of tRNA, leading to the formation of s(2)U34. This Streptococcus pyogenes serotype M2 (strain MGAS10270) protein is tRNA-specific 2-thiouridylase MnmA.